We begin with the raw amino-acid sequence, 222 residues long: Translation initiation factor 6 (222 aa).

The protein belongs to the eIF-6 family.

In terms of biological role, binds to the 50S ribosomal subunit and prevents its association with the 30S ribosomal subunit to form the 70S initiation complex. The protein is Translation initiation factor 6 of Methanocorpusculum labreanum (strain ATCC 43576 / DSM 4855 / Z).